We begin with the raw amino-acid sequence, 388 residues long: Chorismate synthase (388 aa).

Residues arginine 39 and arginine 45 each coordinate NADP(+). Residues 130–132 (RSS), 251–252 (NA), glycine 296, 311–315 (KPIPT), and arginine 337 each bind FMN.

This sequence belongs to the chorismate synthase family. As to quaternary structure, homotetramer. It depends on FMNH2 as a cofactor.

The enzyme catalyses 5-O-(1-carboxyvinyl)-3-phosphoshikimate = chorismate + phosphate. It functions in the pathway metabolic intermediate biosynthesis; chorismate biosynthesis; chorismate from D-erythrose 4-phosphate and phosphoenolpyruvate: step 7/7. In terms of biological role, catalyzes the anti-1,4-elimination of the C-3 phosphate and the C-6 proR hydrogen from 5-enolpyruvylshikimate-3-phosphate (EPSP) to yield chorismate, which is the branch point compound that serves as the starting substrate for the three terminal pathways of aromatic amino acid biosynthesis. This reaction introduces a second double bond into the aromatic ring system. The protein is Chorismate synthase of Streptococcus thermophilus (strain CNRZ 1066).